The chain runs to 359 residues: Histidinol-phosphate aminotransferase (359 aa).

Lys217 carries the N6-(pyridoxal phosphate)lysine modification.

Belongs to the class-II pyridoxal-phosphate-dependent aminotransferase family. Histidinol-phosphate aminotransferase subfamily. Homodimer. It depends on pyridoxal 5'-phosphate as a cofactor.

It catalyses the reaction L-histidinol phosphate + 2-oxoglutarate = 3-(imidazol-4-yl)-2-oxopropyl phosphate + L-glutamate. Its pathway is amino-acid biosynthesis; L-histidine biosynthesis; L-histidine from 5-phospho-alpha-D-ribose 1-diphosphate: step 7/9. The polypeptide is Histidinol-phosphate aminotransferase (Salmonella heidelberg (strain SL476)).